Here is a 394-residue protein sequence, read N- to C-terminus: Elongation factor Tu 1 (394 aa).

One can recognise a tr-type G domain in the interval 10 to 204 (KPHVNVGTIG…YLDSYIPEPE (195 aa)). Residues 19–26 (GHVDHGKT) form a G1 region. Residue 19 to 26 (GHVDHGKT) participates in GTP binding. Thr26 serves as a coordination point for Mg(2+). The tract at residues 60–64 (GITIN) is G2. The segment at 81-84 (DCPG) is G3. GTP is bound by residues 81–85 (DCPGH) and 136–139 (NKCD). Residues 136–139 (NKCD) are G4. Residues 174–176 (SAL) are G5.

This sequence belongs to the TRAFAC class translation factor GTPase superfamily. Classic translation factor GTPase family. EF-Tu/EF-1A subfamily. As to quaternary structure, monomer.

It is found in the cytoplasm. The enzyme catalyses GTP + H2O = GDP + phosphate + H(+). GTP hydrolase that promotes the GTP-dependent binding of aminoacyl-tRNA to the A-site of ribosomes during protein biosynthesis. The polypeptide is Elongation factor Tu 1 (Serratia proteamaculans (strain 568)).